The chain runs to 695 residues: Elongation factor G 1 (695 aa).

One can recognise a tr-type G domain in the interval 6 to 281 (TRYRNIGIFA…AVVDYLPNPK (276 aa)). GTP-binding positions include 15–22 (AHVDAGKT), 79–83 (DTPGH), and 133–136 (NKLD).

Belongs to the TRAFAC class translation factor GTPase superfamily. Classic translation factor GTPase family. EF-G/EF-2 subfamily.

The protein resides in the cytoplasm. Catalyzes the GTP-dependent ribosomal translocation step during translation elongation. During this step, the ribosome changes from the pre-translocational (PRE) to the post-translocational (POST) state as the newly formed A-site-bound peptidyl-tRNA and P-site-bound deacylated tRNA move to the P and E sites, respectively. Catalyzes the coordinated movement of the two tRNA molecules, the mRNA and conformational changes in the ribosome. In Synechocystis sp. (strain ATCC 27184 / PCC 6803 / Kazusa), this protein is Elongation factor G 1 (fusA).